The chain runs to 417 residues: L-rhamnose isomerase (417 aa).

Mn(2+) is bound by residues H260, D292, and D294.

It belongs to the rhamnose isomerase family. The cofactor is Mn(2+).

It is found in the cytoplasm. It catalyses the reaction L-rhamnopyranose = L-rhamnulose. The protein operates within carbohydrate degradation; L-rhamnose degradation; glycerone phosphate from L-rhamnose: step 1/3. Its function is as follows. Catalyzes the interconversion of L-rhamnose and L-rhamnulose. In Mannheimia succiniciproducens (strain KCTC 0769BP / MBEL55E), this protein is L-rhamnose isomerase.